Consider the following 403-residue polypeptide: Homoserine O-succinyltransferase (403 aa).

A disordered region spans residues 1–31 (MTELQVDPAASADPAAAADTPRHPAATLPPD). Residues 7–26 (DPAASADPAAAADTPRHPAA) show a composition bias toward low complexity. The 310-residue stretch at 74–383 (NAVLICHALN…HGHDAFLLED (310 aa)) folds into the AB hydrolase-1 domain. The active-site Nucleophile is Ser178. Arg248 contacts substrate. Catalysis depends on residues Asp343 and His376. Residue Asp377 coordinates substrate.

It belongs to the AB hydrolase superfamily. MetX family. As to quaternary structure, homodimer.

It localises to the cytoplasm. It catalyses the reaction L-homoserine + succinyl-CoA = O-succinyl-L-homoserine + CoA. The protein operates within amino-acid biosynthesis; L-methionine biosynthesis via de novo pathway; O-succinyl-L-homoserine from L-homoserine: step 1/1. Functionally, transfers a succinyl group from succinyl-CoA to L-homoserine, forming succinyl-L-homoserine. This is Homoserine O-succinyltransferase from Ralstonia nicotianae (strain ATCC BAA-1114 / GMI1000) (Ralstonia solanacearum).